Consider the following 433-residue polypeptide: Histidinol dehydrogenase (433 aa).

Residues tyrosine 129, glutamine 191, and asparagine 214 each contribute to the NAD(+) site. Substrate contacts are provided by serine 237, glutamine 259, and histidine 262. Zn(2+) is bound by residues glutamine 259 and histidine 262. Residues glutamate 326 and histidine 327 each act as proton acceptor in the active site. The substrate site is built by histidine 327, aspartate 360, glutamate 414, and histidine 419. Position 360 (aspartate 360) interacts with Zn(2+). Histidine 419 contributes to the Zn(2+) binding site.

It belongs to the histidinol dehydrogenase family. Requires Zn(2+) as cofactor.

The catalysed reaction is L-histidinol + 2 NAD(+) + H2O = L-histidine + 2 NADH + 3 H(+). Its pathway is amino-acid biosynthesis; L-histidine biosynthesis; L-histidine from 5-phospho-alpha-D-ribose 1-diphosphate: step 9/9. Catalyzes the sequential NAD-dependent oxidations of L-histidinol to L-histidinaldehyde and then to L-histidine. In Methanosarcina barkeri (strain Fusaro / DSM 804), this protein is Histidinol dehydrogenase.